Reading from the N-terminus, the 180-residue chain is Der GTPase-activating protein YihI (180 aa).

The span at 1–10 (MKQPARTSQV) shows a compositional bias: polar residues. Disordered stretches follow at residues 1 to 102 (MKQP…PRLT) and 158 to 180 (DAED…RTPE). A compositionally biased stretch (basic and acidic residues) spans 21–32 (TREEINQEARDR). A compositionally biased stretch (polar residues) spans 45–54 (SRANPATVSQ). Residues 55 to 67 (KGDKSQSVKDPRI) show a composition bias toward basic and acidic residues. Residues 84-93 (PANPVKAAKP) are compositionally biased toward low complexity.

This sequence belongs to the YihI family. In terms of assembly, interacts with Der.

A GTPase-activating protein (GAP) that modifies Der/EngA GTPase function. May play a role in ribosome biogenesis. The chain is Der GTPase-activating protein YihI from Erwinia tasmaniensis (strain DSM 17950 / CFBP 7177 / CIP 109463 / NCPPB 4357 / Et1/99).